The following is a 95-amino-acid chain: Co-chaperonin GroES (95 aa).

This sequence belongs to the GroES chaperonin family. In terms of assembly, heptamer of 7 subunits arranged in a ring. Interacts with the chaperonin GroEL.

It localises to the cytoplasm. In terms of biological role, together with the chaperonin GroEL, plays an essential role in assisting protein folding. The GroEL-GroES system forms a nano-cage that allows encapsulation of the non-native substrate proteins and provides a physical environment optimized to promote and accelerate protein folding. GroES binds to the apical surface of the GroEL ring, thereby capping the opening of the GroEL channel. The chain is Co-chaperonin GroES from Pelobacter propionicus (strain DSM 2379 / NBRC 103807 / OttBd1).